The sequence spans 205 residues: MSPKVTKEHKDKRQAEILEAAKTVFKRKGFELTTMKDVVEESGFSRGGVYLYFSSTEEMFRRIIETGLDEGLRKLDKSAEHQSVWASISSYLDELTEGLRDVADTLAPVQFEYLVTAWRNEERRQYLEKRYDLFVERFSRLLQKGIDQGEFQPVQPLATIAKFFLNMNDGIIQNALYFDEEKADVSGLAESAKLYLKTVLQADEK.

In terms of domain architecture, HTH tetR-type spans 11-71; that stretch reads DKRQAEILEA…RIIETGLDEG (61 aa). The H-T-H motif DNA-binding region spans 34–53; that stretch reads TMKDVVEESGFSRGGVYLYF.

This is an uncharacterized protein from Bacillus subtilis (strain 168).